Consider the following 198-residue polypeptide: Peroxynitrite isomerase (198 aa).

Positions 20-26 (GVWEGTG) match the GXWXGXG motif. Residue His189 participates in heme b binding.

It belongs to the nitrobindin family. Homodimer. Heme b serves as cofactor.

The enzyme catalyses peroxynitrite = nitrate. It participates in nitrogen metabolism. Its function is as follows. Heme-binding protein able to scavenge peroxynitrite and to protect free L-tyrosine against peroxynitrite-mediated nitration, by acting as a peroxynitrite isomerase that converts peroxynitrite to nitrate. Therefore, this protein likely plays a role in peroxynitrite sensing and in the detoxification of reactive nitrogen and oxygen species (RNS and ROS, respectively). Is able to bind nitric oxide (NO) in vitro, but may act as a sensor of peroxynitrite levels in vivo. In Leifsonia xyli subsp. xyli (strain CTCB07), this protein is Peroxynitrite isomerase.